The primary structure comprises 307 residues: Nicotinamide/nicotinic acid mononucleotide adenylyltransferase 2 (307 aa).

Positions 16 and 17 each coordinate NAD(+). Residue His-24 participates in ATP binding. Residues Trp-92 and Thr-95 each contribute to the NAD(+) site. 2 S-palmitoyl cysteine lipidation sites follow: Cys-164 and Cys-165. Residues Gly-200, Asp-202, Leu-212, Trp-213, and Arg-232 each coordinate NAD(+). 271-274 (TKSR) contacts ATP.

Belongs to the eukaryotic NMN adenylyltransferase family. In terms of assembly, monomer. Mg(2+) is required as a cofactor. In terms of processing, degraded in response to injured neurite. Degradation is caused by polyubiquitination by MYCBP2 after recognition by FBXO45. Post-translationally, palmitoylated; palmitoylation is required for membrane association.

Its subcellular location is the golgi apparatus membrane. The protein resides in the cytoplasmic vesicle membrane. It is found in the cytoplasm. It localises to the cell projection. The protein localises to the axon. The catalysed reaction is beta-nicotinamide D-ribonucleotide + ATP + H(+) = diphosphate + NAD(+). It carries out the reaction nicotinate beta-D-ribonucleotide + ATP + H(+) = deamido-NAD(+) + diphosphate. The protein operates within cofactor biosynthesis; NAD(+) biosynthesis; NAD(+) from nicotinamide D-ribonucleotide: step 1/1. It participates in cofactor biosynthesis; NAD(+) biosynthesis; deamido-NAD(+) from nicotinate D-ribonucleotide: step 1/1. With respect to regulation, inhibited by P1-(adenosine-5')-P3-(nicotinamide-riboside-5')-triphosphate (Np3AD) and P1-(adenosine-5')-P4-(nicotinamide-riboside-5')-tetraphosphate (Np4AD). Its function is as follows. Nicotinamide/nicotinate-nucleotide adenylyltransferase that acts as an axon maintenance factor. Axon survival factor required for the maintenance of healthy axons: acts by delaying Wallerian axon degeneration, an evolutionarily conserved process that drives the loss of damaged axons. Catalyzes the formation of NAD(+) from nicotinamide mononucleotide (NMN) and ATP. Can also use the deamidated form; nicotinic acid mononucleotide (NaMN) as substrate but with a lower efficiency. Cannot use triazofurin monophosphate (TrMP) as substrate. Also catalyzes the reverse reaction, i.e. the pyrophosphorolytic cleavage of NAD(+). For the pyrophosphorolytic activity prefers NAD(+), NADH and NaAD as substrates and degrades nicotinic acid adenine dinucleotide phosphate (NHD) less effectively. Fails to cleave phosphorylated dinucleotides NADP(+), NADPH and NaADP(+). Also acts as an activator of ADP-ribosylation by supporting the catalytic activity of PARP16 and promoting mono-ADP-ribosylation of ribosomes by PARP16. May be involved in the maintenance of axonal integrity. This chain is Nicotinamide/nicotinic acid mononucleotide adenylyltransferase 2 (Nmnat2), found in Rattus norvegicus (Rat).